The following is a 213-amino-acid chain: Thymidylate kinase (213 aa).

10–17 lines the ATP pocket; it reads GIDGCGKT.

The protein belongs to the thymidylate kinase family.

It catalyses the reaction dTMP + ATP = dTDP + ADP. In terms of biological role, phosphorylation of dTMP to form dTDP in both de novo and salvage pathways of dTTP synthesis. The chain is Thymidylate kinase from Synechococcus sp. (strain WH7803).